We begin with the raw amino-acid sequence, 493 residues long: Glycerol kinase (493 aa).

Thr13 contacts ADP. ATP-binding residues include Thr13, Thr14, and Ser15. Position 13 (Thr13) interacts with sn-glycerol 3-phosphate. Arg17 provides a ligand contact to ADP. Residues Arg83, Glu84, Tyr135, and Asp244 each contribute to the sn-glycerol 3-phosphate site. Residues Arg83, Glu84, Tyr135, Asp244, and Gln245 each contribute to the glycerol site. The ADP site is built by Thr266 and Gly309. Residues Thr266, Gly309, Gln313, and Gly410 each coordinate ATP. ADP-binding residues include Gly410 and Asn414.

It belongs to the FGGY kinase family.

It carries out the reaction glycerol + ATP = sn-glycerol 3-phosphate + ADP + H(+). The protein operates within polyol metabolism; glycerol degradation via glycerol kinase pathway; sn-glycerol 3-phosphate from glycerol: step 1/1. Its activity is regulated as follows. Inhibited by fructose 1,6-bisphosphate (FBP). Its function is as follows. Key enzyme in the regulation of glycerol uptake and metabolism. Catalyzes the phosphorylation of glycerol to yield sn-glycerol 3-phosphate. In Shewanella halifaxensis (strain HAW-EB4), this protein is Glycerol kinase.